A 1072-amino-acid polypeptide reads, in one-letter code: DNA-directed RNA polymerase subunit beta (1072 aa).

It belongs to the RNA polymerase beta chain family. In plastids the minimal PEP RNA polymerase catalytic core is composed of four subunits: alpha, beta, beta', and beta''. When a (nuclear-encoded) sigma factor is associated with the core the holoenzyme is formed, which can initiate transcription.

The protein resides in the plastid. It localises to the chloroplast. It catalyses the reaction RNA(n) + a ribonucleoside 5'-triphosphate = RNA(n+1) + diphosphate. DNA-dependent RNA polymerase catalyzes the transcription of DNA into RNA using the four ribonucleoside triphosphates as substrates. The sequence is that of DNA-directed RNA polymerase subunit beta from Lemna minor (Common duckweed).